Reading from the N-terminus, the 516-residue chain is Probable serine/threonine-protein kinase ECU02_0550 (516 aa).

The region spanning 4 to 230 (YKLRQVIGEG…ASEALMHRSF (227 aa)) is the Protein kinase domain. Residues 10–18 (IGEGASSTV) and Lys-32 contribute to the ATP site. Asp-120 functions as the Proton acceptor in the catalytic mechanism.

Belongs to the protein kinase superfamily. CAMK Ser/Thr protein kinase family.

The enzyme catalyses L-seryl-[protein] + ATP = O-phospho-L-seryl-[protein] + ADP + H(+). The catalysed reaction is L-threonyl-[protein] + ATP = O-phospho-L-threonyl-[protein] + ADP + H(+). The protein is Probable serine/threonine-protein kinase ECU02_0550 of Encephalitozoon cuniculi (strain GB-M1) (Microsporidian parasite).